The sequence spans 252 residues: Coenzyme F420:L-glutamate ligase (252 aa).

GTP contacts are provided by residues valine 12–glutamate 15, histidine 44–threonine 45, and lysine 49. Residue aspartate 114 participates in a divalent metal cation binding. Asparagine 117 lines the GTP pocket. A divalent metal cation contacts are provided by aspartate 155, threonine 156, and glutamine 213. Methionine 211–threonine 218 provides a ligand contact to GTP.

The protein belongs to the CofE family. In terms of assembly, homodimer. Mg(2+) serves as cofactor. It depends on Mn(2+) as a cofactor. Requires K(+) as cofactor.

The enzyme catalyses oxidized coenzyme F420-0 + GTP + L-glutamate = oxidized coenzyme F420-1 + GDP + phosphate + H(+). It carries out the reaction oxidized coenzyme F420-1 + GTP + L-glutamate = oxidized coenzyme F420-2 + GDP + phosphate + H(+). It functions in the pathway cofactor biosynthesis; coenzyme F420 biosynthesis. Catalyzes the GTP-dependent successive addition of two or more gamma-linked L-glutamates to the L-lactyl phosphodiester of 7,8-didemethyl-8-hydroxy-5-deazariboflavin (F420-0) to form coenzyme F420-0-glutamyl-glutamate (F420-2) or polyglutamated F420 derivatives. The polypeptide is Coenzyme F420:L-glutamate ligase (Methanopyrus kandleri (strain AV19 / DSM 6324 / JCM 9639 / NBRC 100938)).